Consider the following 464-residue polypeptide: Keratin, type I cytoskeletal 28 (464 aa).

Positions 1–85 are head; sequence MSLRFSSGSR…GSEGGLFSGN (85 aa). Residues 86 to 121 are coil 1A; sequence EKVTMQNLNDRLASYLDNVRALEEANAELERKIKSW. One can recognise an IF rod domain in the interval 86 to 401; sequence EKVTMQNLND…RLIDGDRNSC (316 aa). The interval 122-143 is linker 1; that stretch reads YEKHGPGSCHGLDHDYSRYHLT. Residues 144 to 235 form a coil 1B region; that stretch reads IEDLKNKIIS…KNHEEEVKAL (92 aa). The linker 12 stretch occupies residues 236-258; that stretch reads QCVAGGNVNVEMNAAPGVDLTLL. The interval 259–397 is coil 2; it reads LNNMRAEYED…ETYCRLIDGD (139 aa). Residues 398-464 are tail; sequence RNSCSKSKGF…NGKTKQRVPF (67 aa). Low complexity predominate over residues 402–417; the sequence is SKSKGFGSGSPGNSSK. 2 disordered regions span residues 402–422 and 440–464; these read SKSK…LSRT and SSRV…RVPF.

The protein belongs to the intermediate filament family. In terms of assembly, heterotetramer of two type I and two type II keratins.

The protein localises to the cytoplasm. Its function is as follows. Essential for the proper assembly of types I and II keratin protein complexes and the formation of keratin intermediate filaments in the inner root sheath (irs). This Bos taurus (Bovine) protein is Keratin, type I cytoskeletal 28.